The primary structure comprises 426 residues: Enolase (426 aa).

Residue Gln-163 coordinates (2R)-2-phosphoglycerate. The active-site Proton donor is Glu-205. 3 residues coordinate Mg(2+): Asp-242, Glu-283, and Asp-310. (2R)-2-phosphoglycerate-binding residues include Lys-335, Arg-364, Ser-365, and Lys-386. Lys-335 (proton acceptor) is an active-site residue.

This sequence belongs to the enolase family. Mg(2+) is required as a cofactor.

It is found in the cytoplasm. Its subcellular location is the secreted. The protein localises to the cell surface. The enzyme catalyses (2R)-2-phosphoglycerate = phosphoenolpyruvate + H2O. It functions in the pathway carbohydrate degradation; glycolysis; pyruvate from D-glyceraldehyde 3-phosphate: step 4/5. Catalyzes the reversible conversion of 2-phosphoglycerate (2-PG) into phosphoenolpyruvate (PEP). It is essential for the degradation of carbohydrates via glycolysis. This is Enolase from Pseudarthrobacter chlorophenolicus (strain ATCC 700700 / DSM 12829 / CIP 107037 / JCM 12360 / KCTC 9906 / NCIMB 13794 / A6) (Arthrobacter chlorophenolicus).